Here is a 67-residue protein sequence, read N- to C-terminus: Large ribosomal subunit protein uL29 (67 aa).

This sequence belongs to the universal ribosomal protein uL29 family.

The sequence is that of Large ribosomal subunit protein uL29 from Polaromonas naphthalenivorans (strain CJ2).